A 289-amino-acid polypeptide reads, in one-letter code: Proteasome assembly chaperone 1 (289 aa).

Positions 1-38 are disordered; the sequence is MAATFFGEVVKAPCRAGTEEEEEEEEQSRRDTPEDREV. N-acetylalanine is present on A2. At T18 the chain carries Phosphothreonine. Over residues 27–38 the composition is skewed to basic and acidic residues; sequence QSRRDTPEDREV. T55 is subject to Phosphothreonine. Phosphoserine is present on S181. K265 carries the N6-acetyllysine modification.

Belongs to the PSMG1 family. In terms of assembly, forms a heterodimer with PSMG2. The PSMG1-PSMG2 heterodimer interacts directly with the PSMA5 and PSMA7 proteasome alpha subunits. Degraded by the proteasome upon completion of 20S proteasome maturation. As to expression, highly expressed in testis with moderate expression in brain, liver and kidney and low levels in heart, skeletal muscle and pancreas.

Its subcellular location is the cytoplasm. The protein localises to the endoplasmic reticulum. Functionally, chaperone protein which promotes assembly of the 20S proteasome as part of a heterodimer with PSMG2. The PSMG1-PSMG2 heterodimer binds to the PSMA5 and PSMA7 proteasome subunits, promotes assembly of the proteasome alpha subunits into the heteroheptameric alpha ring and prevents alpha ring dimerization. This Mus musculus (Mouse) protein is Proteasome assembly chaperone 1.